The following is a 299-amino-acid chain: Taste receptor type 2 member 50 (299 aa).

Residue Met1 is a topological domain, extracellular. A helical membrane pass occupies residues 2–22 (VTFLHIFFSILILVLFVLGNF). Residues 23-55 (ANGFIALVNFIDLVKRKKISSADQILTALAVSR) lie on the Cytoplasmic side of the membrane. The chain crosses the membrane as a helical span at residues 56-76 (IGLLWALLLNWYLTVLNPAFY). Residues 77-87 (SVELRITSYNA) are Extracellular-facing. Residues 88 to 108 (WVVTNHFSMWLAASLSIFYLL) traverse the membrane as a helical segment. The Cytoplasmic segment spans residues 109-126 (KIANFSNLIFLHLKRRVR). The chain crosses the membrane as a helical span at residues 127-147 (SVILVILLGPLTFLVCHLFVA). Residues 148-181 (NMDESMSAEEYEGNMTGKLKLRNTVHLSYLTVTT) lie on the Extracellular side of the membrane. A glycan (N-linked (GlcNAc...) asparagine) is linked at Asn161. Residues 182-202 (LWSFIPFTLSLISFLMLICSL) traverse the membrane as a helical segment. At 203 to 229 (CKHVKKMQLHGEGSQDLSTKVHIKALQ) the chain is on the cytoplasmic side. The helical transmembrane segment at 230–250 (TLISFLLLCAIFFLFLIISIW) threads the bilayer. Residues 251–259 (NPRRLQNDP) are Extracellular-facing. Residues 260–280 (VVVVSKAVGNIYLALDSFILI) form a helical membrane-spanning segment. The Cytoplasmic segment spans residues 281-299 (WRTKKLKHTFLLILCQIRC).

Belongs to the G-protein coupled receptor T2R family.

Its subcellular location is the membrane. Functionally, receptor that may play a role in the perception of bitterness and is gustducin-linked. May play a role in sensing the chemical composition of the gastrointestinal content. The activity of this receptor may stimulate alpha gustducin, mediate PLC-beta-2 activation and lead to the gating of TRPM5. The polypeptide is Taste receptor type 2 member 50 (TAS2R50) (Pongo pygmaeus (Bornean orangutan)).